A 1141-amino-acid chain; its full sequence is Putative late blight resistance protein homolog R1B-13 (1141 aa).

The stretch at 417–437 forms a coiled coil; sequence DSLAFLKNQIQVIQMEFEILQ. Residues 516-742 form the NB-ARC domain; it reads TVITHTSSQL…LSIVLVADVL (227 aa). LRR repeat units follow at residues 826–851, 869–894, 992–1016, 1017–1041, and 1043–1068; these read FKFL…PYLR, LWNL…VWDM, APNL…TVDH, LKHL…VSNG, and FPQL…AFPI.

It belongs to the disease resistance NB-LRR family.

It localises to the cytoplasm. The protein localises to the membrane. Functionally, confers resistance to late blight (Phytophthora infestans) races carrying the avirulence gene Avr1. Resistance proteins guard the plant against pathogens that contain an appropriate avirulence protein via an indirect interaction with this avirulence protein. That triggers a defense system including the hypersensitive response, which restricts the pathogen growth. The protein is Putative late blight resistance protein homolog R1B-13 (R1B-13) of Solanum demissum (Wild potato).